We begin with the raw amino-acid sequence, 419 residues long: UDP-N-acetylmuramoylalanine--D-glutamate ligase (419 aa).

109-115 (GSAGKTT) is a binding site for ATP.

Belongs to the MurCDEF family.

It is found in the cytoplasm. It catalyses the reaction UDP-N-acetyl-alpha-D-muramoyl-L-alanine + D-glutamate + ATP = UDP-N-acetyl-alpha-D-muramoyl-L-alanyl-D-glutamate + ADP + phosphate + H(+). The protein operates within cell wall biogenesis; peptidoglycan biosynthesis. Cell wall formation. Catalyzes the addition of glutamate to the nucleotide precursor UDP-N-acetylmuramoyl-L-alanine (UMA). This is UDP-N-acetylmuramoylalanine--D-glutamate ligase from Chlamydia caviae (strain ATCC VR-813 / DSM 19441 / 03DC25 / GPIC) (Chlamydophila caviae).